The primary structure comprises 257 residues: Indole-3-glycerol phosphate synthase (257 aa).

Belongs to the TrpC family.

It catalyses the reaction 1-(2-carboxyphenylamino)-1-deoxy-D-ribulose 5-phosphate + H(+) = (1S,2R)-1-C-(indol-3-yl)glycerol 3-phosphate + CO2 + H2O. It participates in amino-acid biosynthesis; L-tryptophan biosynthesis; L-tryptophan from chorismate: step 4/5. The protein is Indole-3-glycerol phosphate synthase of Phenylobacterium zucineum (strain HLK1).